Reading from the N-terminus, the 188-residue chain is CASP-like protein 4B3 (188 aa).

Positions 1 to 21 (MSFSPASSEPHDAPAAAGSSV) are disordered. The Cytoplasmic segment spans residues 1–42 (MSFSPASSEPHDAPAAAGSSVPASRSIAERWKMEAAPIRARL). The chain crosses the membrane as a helical span at residues 43–63 (LLRAFAWLFSLLALVVMATDV). At 64-76 (HGRGGAQDFSTYP) the chain is on the extracellular side. Residues 77 to 97 (EYNYCLGMSIIALLYATAQLV) form a helical membrane-spanning segment. Over 98–114 (RDAHRLSSGRDLVAGRK) the chain is Cytoplasmic. Residues 115–135 (AAAVVDFAGDQVVAYSLISGL) form a helical membrane-spanning segment. At 136–156 (SAAAPVTDYMRQATDNLFNDS) the chain is on the extracellular side. Residue Asn-154 is glycosylated (N-linked (GlcNAc...) asparagine). A helical transmembrane segment spans residues 157–177 (AAAAISLAFFAFLAISLSALI). Residues 178–188 (SGYNLSLEAIV) are Cytoplasmic-facing.

This sequence belongs to the Casparian strip membrane proteins (CASP) family. In terms of assembly, homodimer and heterodimers.

It is found in the cell membrane. In Hordeum vulgare subsp. vulgare (Domesticated barley), this protein is CASP-like protein 4B3.